We begin with the raw amino-acid sequence, 723 residues long: MSEKQVFSTEWAGKTLSVEVGQLAKQASGAALIRYGDTVVLTAAVGSKKPRPGDFFPLTVNYEEKMYSVGKVPGGFLKREGRPSDRATLTARLIDRPIRPLFAEGFRNEVQITSTVFSVDQDCSPEMAAMLGSSVALVISDIPFEGPIAGVDVGRIDGKYVINPTIEQAEKSDISLTVAGTYDAINMVEAGAKEVSEEAMLEAIMFGHEEIKRLCEFQQQIIAAVGKEKREIELFVSDPELEAEVKAASEGKMKTAIKTEEKKAREAAIEEVKEEILESYKAKELENESEILSEVAHILEMIEKDEMRRLISQDKIRPDGRKVNEIRPLSSEVGMLPRVHGSGLFTRGQTQALSVCTLAPLREHQIIDGLGTEEYKRFMHHYNFPQFSVGETGPRRAPGRREIGHGALGERALQYVIPSEEEFPYTIRLVSEVLESNGSSSQASICGSTLAMLDAGVPIKAPVAGIAMGLVKLGDDYTILSDIQGMEDHFGDMDFKVAGTKDGITALQMDIKIDGLSRQILDEALTQAKEGRLHILEHLTSTISAPREELSAYAPKIITLNIKPEKIKDVIGPGGKQINAIIDETGVKIDIEQDGTVYIASQDQAMNRKAIAIIEDIVREVEVGEVYTGKVRRIEKFGAFVELFKGTDGLVHISELAHERVGKVEDILKLGDEVTVKVIEVDQQGRVNLSRKALLEKKEQPEGDKKPQAEKKFYPKTKKPESK.

Mg(2+) contacts are provided by D488 and D494. Residues 555-614 (PKIITLNIKPEKIKDVIGPGGKQINAIIDETGVKIDIEQDGTVYIASQDQAMNRKAIAII) enclose the KH domain. In terms of domain architecture, S1 motif spans 624 to 692 (GEVYTGKVRR…QQGRVNLSRK (69 aa)). A disordered region spans residues 692–723 (KALLEKKEQPEGDKKPQAEKKFYPKTKKPESK). Residues 693-723 (ALLEKKEQPEGDKKPQAEKKFYPKTKKPESK) show a composition bias toward basic and acidic residues.

It belongs to the polyribonucleotide nucleotidyltransferase family. Mg(2+) serves as cofactor.

The protein localises to the cytoplasm. The catalysed reaction is RNA(n+1) + phosphate = RNA(n) + a ribonucleoside 5'-diphosphate. Its function is as follows. Involved in mRNA degradation. Catalyzes the phosphorolysis of single-stranded polyribonucleotides processively in the 3'- to 5'-direction. This Listeria monocytogenes serovar 1/2a (strain ATCC BAA-679 / EGD-e) protein is Polyribonucleotide nucleotidyltransferase.